Reading from the N-terminus, the 104-residue chain is Pyrimidine/purine nucleoside phosphorylase (104 aa).

The protein belongs to the nucleoside phosphorylase PpnP family.

It catalyses the reaction a purine D-ribonucleoside + phosphate = a purine nucleobase + alpha-D-ribose 1-phosphate. The enzyme catalyses adenosine + phosphate = alpha-D-ribose 1-phosphate + adenine. It carries out the reaction cytidine + phosphate = cytosine + alpha-D-ribose 1-phosphate. The catalysed reaction is guanosine + phosphate = alpha-D-ribose 1-phosphate + guanine. It catalyses the reaction inosine + phosphate = alpha-D-ribose 1-phosphate + hypoxanthine. The enzyme catalyses thymidine + phosphate = 2-deoxy-alpha-D-ribose 1-phosphate + thymine. It carries out the reaction uridine + phosphate = alpha-D-ribose 1-phosphate + uracil. The catalysed reaction is xanthosine + phosphate = alpha-D-ribose 1-phosphate + xanthine. Functionally, catalyzes the phosphorolysis of diverse nucleosides, yielding D-ribose 1-phosphate and the respective free bases. Can use uridine, adenosine, guanosine, cytidine, thymidine, inosine and xanthosine as substrates. Also catalyzes the reverse reactions. This is Pyrimidine/purine nucleoside phosphorylase from Colwellia psychrerythraea (strain 34H / ATCC BAA-681) (Vibrio psychroerythus).